Here is a 658-residue protein sequence, read N- to C-terminus: NUAK family SNF1-like kinase 1 (658 aa).

Position 1 is an N-acetylmethionine (methionine 1). Residues 1 to 53 (MEGAAVSAAGDGPAVETGLPGSPLEAVAGATAAPVEPRKPHGVKRHHHKHNLK) are disordered. Serine 22 carries the post-translational modification Phosphoserine. Over residues 40 to 53 (PHGVKRHHHKHNLK) the composition is skewed to basic residues. Positions 56–307 (YELQETLGKG…IEDIANHWWV (252 aa)) constitute a Protein kinase domain. ATP contacts are provided by residues 62-70 (LGKGTYGKV) and lysine 85. Catalysis depends on aspartate 179, which acts as the Proton acceptor. The residue at position 212 (threonine 212) is a Phosphothreonine; by LKB1. Disordered regions lie at residues 353–422 (LAKP…EGIV) and 441–568 (IPLP…SYSR). Residues 378–393 (FPQSGQDSVPESPSKL) show a composition bias toward polar residues. Basic residues predominate over residues 394-405 (SSKRPKGILKKR). A GILK motif motif is present at residues 400–403 (GILK). Serine 456 bears the Phosphoserine mark. Basic residues predominate over residues 519-530 (SCRRKGILKHSS). Over residues 559–568 (SDGISRSYSR) the composition is skewed to low complexity. Residue serine 601 is modified to Phosphoserine; by PKB/AKT1.

Belongs to the protein kinase superfamily. CAMK Ser/Thr protein kinase family. SNF1 subfamily. Interacts (via GILK motif) with PPP1CB; the interaction is direct and bridges NUAK1 and PPP1R12A. Interacts with CDKN1A. Mg(2+) serves as cofactor. In terms of processing, phosphorylated at Thr-212 by STK11/LKB1 in complex with STE20-related adapter-alpha (STRADA) pseudo kinase and CAB39. Not dephosphorylated by the myosin PP1 complex when regulating its activity, due to the presence of PPP1R12A, which prevents myosin PP1 from dephosphorylating NUAK1. Phosphorylated by STK38L upon stimulation with IGF1. Post-translationally, ubiquitinated with 'Lys-29'- and 'Lys-33'-linked polyubiquitins which appear to impede LKB1-mediated phosphorylation. Deubiquitinated by USP9X. As to expression, expressed in the developing central nervous system, in epidermis, and some other tissues.

It localises to the nucleus. Its subcellular location is the cytoplasm. The enzyme catalyses L-seryl-[protein] + ATP = O-phospho-L-seryl-[protein] + ADP + H(+). It catalyses the reaction L-threonyl-[protein] + ATP = O-phospho-L-threonyl-[protein] + ADP + H(+). Activated by phosphorylation on Thr-212. Activated by phosphorylation at Ser-601 AKT1 during glucose starvation; the relevance of such activation in normal cells is however unsure. Functionally, serine/threonine-protein kinase involved in various processes such as cell adhesion, regulation of cell ploidy and senescence, cell proliferation and tumor progression. Phosphorylates ATM, CASP6, LATS1, PPP1R12A and p53/TP53. Acts as a regulator of cellular senescence and cellular ploidy by mediating phosphorylation of 'Ser-464' of LATS1, thereby controlling its stability. Controls cell adhesion by regulating activity of the myosin protein phosphatase 1 (PP1) complex. Acts by mediating phosphorylation of PPP1R12A subunit of myosin PP1: phosphorylated PPP1R12A then interacts with 14-3-3, leading to reduced dephosphorylation of myosin MLC2 by myosin PP1. May be involved in DNA damage response: phosphorylates p53/TP53 at 'Ser-15' and 'Ser-392' and is recruited to the CDKN1A/WAF1 promoter to participate in transcription activation by p53/TP53. May also act as a tumor malignancy-associated factor by promoting tumor invasion and metastasis under regulation and phosphorylation by AKT1. Suppresses Fas-induced apoptosis by mediating phosphorylation of CASP6, thereby suppressing the activation of the caspase and the subsequent cleavage of CFLAR. Regulates UV radiation-induced DNA damage response mediated by CDKN1A. In association with STK11, phosphorylates CDKN1A in response to UV radiation and contributes to its degradation which is necessary for optimal DNA repair. This is NUAK family SNF1-like kinase 1 (Nuak1) from Mus musculus (Mouse).